The chain runs to 100 residues: Small ribosomal subunit protein uS14c (100 aa).

Belongs to the universal ribosomal protein uS14 family. In terms of assembly, part of the 30S ribosomal subunit.

The protein resides in the plastid. Its subcellular location is the chloroplast. Functionally, binds 16S rRNA, required for the assembly of 30S particles. This is Small ribosomal subunit protein uS14c from Crucihimalaya wallichii (Rock-cress).